Reading from the N-terminus, the 567-residue chain is Lactase-like protein (567 aa).

The first 21 residues, 1–21 (MKPVWVATLLWMLLLVPRLGA), serve as a signal peptide directing secretion. Topologically, residues 23-541 (RKGSPEEASF…LLSHMQMVTE (519 aa)) are extracellular. Residues Asn80, Asn171, and Asn245 are each glycosylated (N-linked (GlcNAc...) asparagine). A helical transmembrane segment spans residues 542–562 (IVVPTVCSLCVLITAVLLMLL). Topologically, residues 563 to 567 (LRRQS) are cytoplasmic.

Belongs to the glycosyl hydrolase 1 family. Klotho subfamily. May form dimers.

Its subcellular location is the endoplasmic reticulum membrane. In terms of biological role, plays a role in formation of the lens suture in the eye, which is important for normal optical properties of the lens. This is Lactase-like protein (LCTL) from Homo sapiens (Human).